Here is a 309-residue protein sequence, read N- to C-terminus: Ornithine carbamoyltransferase (309 aa).

Carbamoyl phosphate-binding positions include 52-55 (STRT), glutamine 79, arginine 103, and 130-133 (HPCQ). Residues asparagine 161, aspartate 221, and 225 to 226 (SM) contribute to the L-ornithine site. Carbamoyl phosphate is bound by residues 261–262 (CL) and arginine 289.

The protein belongs to the aspartate/ornithine carbamoyltransferase superfamily. OTCase family.

It localises to the cytoplasm. It catalyses the reaction carbamoyl phosphate + L-ornithine = L-citrulline + phosphate + H(+). Its pathway is amino-acid biosynthesis; L-arginine biosynthesis; L-arginine from L-ornithine and carbamoyl phosphate: step 1/3. Reversibly catalyzes the transfer of the carbamoyl group from carbamoyl phosphate (CP) to the N(epsilon) atom of ornithine (ORN) to produce L-citrulline. The polypeptide is Ornithine carbamoyltransferase (Methanoculleus marisnigri (strain ATCC 35101 / DSM 1498 / JR1)).